The primary structure comprises 299 residues: Heat stress transcription factor B-2a (299 aa).

The DNA-binding element occupies 21–115 (PTPFLTKTFN…LLREIQRRKI (95 aa)). Positions 119-157 (HQTVVAPSSEQRNQTMVVSPSNSGEDNNNNQVMSSSPSS) are disordered. The hydrophobic repeat HR-A/B stretch occupies residues 166 to 211 (TGNGGLSVELLEENEKLRSQNIQLNRELTQMKSICDNIYSLMSNYV). Positions 261–264 (KRTR) match the Nuclear localization signal motif.

It belongs to the HSF family. Class B subfamily. Homotrimer. Post-translationally, exhibits temperature-dependent phosphorylation.

It is found in the nucleus. Transcriptional regulator that specifically binds DNA sequence 5'-AGAAnnTTCT-3' known as heat shock promoter elements (HSE). The chain is Heat stress transcription factor B-2a (HSFB2A) from Arabidopsis thaliana (Mouse-ear cress).